Reading from the N-terminus, the 392-residue chain is MALQPASGVRDLNPQQVQRNHELREALAAVYRLWGYEEVAPPRIERMDTLKAGGAIDSRDIVRLVADEPLGLRPEMTASIARAACTRFQNRRRPLRLWSHGTVFEGRQADEGGLCIEEKLHCGVELFGARGVEAELELLSLLMASFKALALPLSEPPQLLIGHTGLMQLLLKNVDEQDHPAYRNCLTQLDRLALRELINTQPQHAHLQQWLDRRGAPDAVISQLKDAFPDAPVLQQLTRLINHLSPLAETTGISLQLDPTFQPMYALYDGIVFQLVCRGTSSPVVVARGGRYDTVVQRLGARGKDATGLGFSFCVDDLRDLPGAFAMTTSRTDRILLCYSQNSSMEQALQAQAGLHRRGLSCQVDHHPCETKAEAEERLREAGCNSLEWVGD.

Belongs to the class-II aminoacyl-tRNA synthetase family. HisZ subfamily. As to quaternary structure, heteromultimer composed of HisG and HisZ subunits.

The protein resides in the cytoplasm. It participates in amino-acid biosynthesis; L-histidine biosynthesis; L-histidine from 5-phospho-alpha-D-ribose 1-diphosphate: step 1/9. Required for the first step of histidine biosynthesis. May allow the feedback regulation of ATP phosphoribosyltransferase activity by histidine. In Synechococcus sp. (strain WH7803), this protein is ATP phosphoribosyltransferase regulatory subunit.